Here is a 255-residue protein sequence, read N- to C-terminus: Flagellar brake protein YcgR (255 aa).

Positions 130-245 (QRREHFRVPL…MAAHLQRFVM (116 aa)) constitute a PilZ domain.

Belongs to the YcgR family. Monomer. Interacts with the flagellar basal bodies.

The protein resides in the bacterial flagellum basal body. Acts as a flagellar brake, regulating swimming and swarming in a bis-(3'-5') cyclic diguanylic acid (c-di-GMP)-dependent manner. Binds 1 c-di-GMP dimer per subunit. Increasing levels of c-di-GMP lead to decreased motility. The chain is Flagellar brake protein YcgR from Thiobacillus denitrificans (strain ATCC 25259 / T1).